The following is a 287-amino-acid chain: Ribosomal RNA small subunit methyltransferase A (287 aa).

6 residues coordinate S-adenosyl-L-methionine: asparagine 18, leucine 20, glycine 45, glutamate 66, aspartate 91, and asparagine 118.

This sequence belongs to the class I-like SAM-binding methyltransferase superfamily. rRNA adenine N(6)-methyltransferase family. RsmA subfamily.

The protein localises to the cytoplasm. It catalyses the reaction adenosine(1518)/adenosine(1519) in 16S rRNA + 4 S-adenosyl-L-methionine = N(6)-dimethyladenosine(1518)/N(6)-dimethyladenosine(1519) in 16S rRNA + 4 S-adenosyl-L-homocysteine + 4 H(+). In terms of biological role, specifically dimethylates two adjacent adenosines (A1518 and A1519) in the loop of a conserved hairpin near the 3'-end of 16S rRNA in the 30S particle. May play a critical role in biogenesis of 30S subunits. The protein is Ribosomal RNA small subunit methyltransferase A of Haemophilus influenzae (strain ATCC 51907 / DSM 11121 / KW20 / Rd).